The sequence spans 242 residues: UPF0246 protein SPCG_1533 (242 aa).

Belongs to the UPF0246 family.

The sequence is that of UPF0246 protein SPCG_1533 from Streptococcus pneumoniae (strain CGSP14).